The chain runs to 505 residues: Phase 1 flagellin (505 aa).

The protein belongs to the bacterial flagellin family.

It localises to the secreted. It is found in the bacterial flagellum. In terms of biological role, flagellin is the subunit protein which polymerizes to form the filaments of bacterial flagella. This chain is Phase 1 flagellin (fliC), found in Salmonella naestved.